The sequence spans 138 residues: NADH-quinone oxidoreductase subunit A (138 aa).

3 helical membrane passes run 8–28 (FGAV…GYLT), 63–83 (FYVV…LFPW), and 93–113 (FALI…AYAW).

This sequence belongs to the complex I subunit 3 family. As to quaternary structure, NDH-1 is composed of 14 different subunits. Subunits NuoA, H, J, K, L, M, N constitute the membrane sector of the complex.

It localises to the cell inner membrane. The enzyme catalyses a quinone + NADH + 5 H(+)(in) = a quinol + NAD(+) + 4 H(+)(out). In terms of biological role, NDH-1 shuttles electrons from NADH, via FMN and iron-sulfur (Fe-S) centers, to quinones in the respiratory chain. The immediate electron acceptor for the enzyme in this species is believed to be a menaquinone. Couples the redox reaction to proton translocation (for every two electrons transferred, four hydrogen ions are translocated across the cytoplasmic membrane), and thus conserves the redox energy in a proton gradient. The sequence is that of NADH-quinone oxidoreductase subunit A from Prosthecochloris aestuarii (strain DSM 271 / SK 413).